Consider the following 120-residue polypeptide: uncharacterized protein (120 aa).

Residues 22-44 traverse the membrane as a helical segment; the sequence is ITVASCIGAAQGALFSIASALLL. Asparagine 114 is a glycosylation site (N-linked (GlcNAc...) asparagine).

Its subcellular location is the membrane. This is an uncharacterized protein from Saccharomyces cerevisiae (strain ATCC 204508 / S288c) (Baker's yeast).